Here is a 541-residue protein sequence, read N- to C-terminus: Myrosinase 1 (541 aa).

The signal sequence occupies residues 1 to 19 (MKLLMLAFVFLLALATCKG). 3 disulfides stabilise this stretch: Cys24/Cys449, Cys32/Cys445, and Cys224/Cys232. Residue Asn33 is glycosylated (N-linked (GlcNAc...) asparagine). Gln57 is an a beta-D-glucoside binding site. Asn108 carries an N-linked (GlcNAc...) asparagine glycan. Position 159 (His159) interacts with a beta-D-glucoside. N-linked (GlcNAc...) asparagine glycosylation is present at Asn175. 204–205 (NQ) provides a ligand contact to a beta-D-glucoside. The N-linked (GlcNAc...) asparagine glycan is linked to Asn236. Tyr348 provides a ligand contact to a beta-D-glucoside. N-linked (GlcNAc...) asparagine glycans are attached at residues Asn356 and Asn379. A beta-D-glucoside contacts are provided by residues Glu420, Trp468, 475-476 (EF), and Phe484. The active-site Nucleophile is Glu420. N-linked (GlcNAc...) asparagine glycosylation is found at Asn493 and Asn512.

This sequence belongs to the glycosyl hydrolase 1 family. In terms of assembly, homodimer. As to expression, expressed in guard cells, phloem-associated cells and myrosin cells.

The protein resides in the vacuole. The enzyme catalyses a thioglucoside + H2O = a sugar + a thiol.. It catalyses the reaction Hydrolysis of terminal, non-reducing beta-D-glucosyl residues with release of beta-D-glucose.. Functionally, degradation of glucosinolates (glucose residue linked by a thioglucoside bound to an amino acid derivative) to glucose, sulfate and any of the products: thiocyanates, isothiocyanates, nitriles, epithionitriles or oxazolidine-2-thiones. These toxic degradation products can deter insect herbivores. Seems to function in abscisic acid (ABA) and methyl jasmonate (MeJA) signaling in guard cells. Functionally redundant with TGG2. Hydrolyzes sinigrin and, with lower efficiency, p-nitrophenyl beta-D-glucoside. The polypeptide is Myrosinase 1 (Arabidopsis thaliana (Mouse-ear cress)).